We begin with the raw amino-acid sequence, 511 residues long: Thioredoxin reductase 2, mitochondrial (511 aa).

Residues 1 to 21 (MAALRGAAARFRGRAPGGARG) constitute a mitochondrion transit peptide. 29 to 58 (DLLVIGGGSGGLACAKEAAQLGKKVAVLDY) contributes to the FAD binding site. Cys-74 and Cys-79 form a disulfide bridge. Lys-316 is modified (N6-succinyllysine). The active-site Proton acceptor is His-484. The segment at residues 509–510 (CU) is a cross-link (cysteinyl-selenocysteine (Cys-Sec)). Residue Sec-510 is a non-standard amino acid, selenocysteine.

The protein belongs to the class-I pyridine nucleotide-disulfide oxidoreductase family. In terms of assembly, homodimer. Requires FAD as cofactor.

The protein resides in the mitochondrion. It carries out the reaction [thioredoxin]-dithiol + NADP(+) = [thioredoxin]-disulfide + NADPH + H(+). Its activity is regulated as follows. Inhibited by 1-chloro-2,4-dinitrobenzene and by zinc, calcium, magnesium and Fe(2+) ions. Its function is as follows. Involved in the control of reactive oxygen species levels and the regulation of mitochondrial redox homeostasis. Maintains thioredoxin in a reduced state. May play a role in redox-regulated cell signaling. In Bos taurus (Bovine), this protein is Thioredoxin reductase 2, mitochondrial (TXNRD2).